A 189-amino-acid polypeptide reads, in one-letter code: UPF0301 protein PLES_04031 (189 aa).

Belongs to the UPF0301 (AlgH) family.

The polypeptide is UPF0301 protein PLES_04031 (Pseudomonas aeruginosa (strain LESB58)).